The following is a 600-amino-acid chain: CTP synthase (600 aa).

Positions 304 to 570 constitute a Glutamine amidotransferase type-1 domain; it reads TIVLVGKYTH…IQSGEEVEWS (267 aa). Catalysis depends on for GATase activity residues C403, H532, and E534.

Belongs to the CTP synthase family.

The enzyme catalyses UTP + L-glutamine + ATP + H2O = CTP + L-glutamate + ADP + phosphate + 2 H(+). The protein operates within pyrimidine metabolism; CTP biosynthesis via de novo pathway; CTP from UDP: step 2/2. Catalyzes the ATP-dependent amination of UTP to CTP with either L-glutamine or ammonia as the source of nitrogen. The polypeptide is CTP synthase (ura7) (Schizosaccharomyces pombe (strain 972 / ATCC 24843) (Fission yeast)).